The primary structure comprises 161 residues: Urease accessory protein UreE (161 aa).

The segment at 133 to 161 (EPEAGAYQSAPHSHSHAHDHPFVRLPAHS) is disordered.

Belongs to the UreE family.

It is found in the cytoplasm. Functionally, involved in urease metallocenter assembly. Binds nickel. Probably functions as a nickel donor during metallocenter assembly. This Pseudomonas putida (strain W619) protein is Urease accessory protein UreE.